We begin with the raw amino-acid sequence, 356 residues long: MAKEHICIIYGGKSAEHDVSLLTAQSVINAMDKDKYAIDTIYITNDGEWLKGPEISETIEDSERLRLSHIERLSISEMLNVSSAGKAYDAVFPLLHGPNGEDGTIQGLFEVLDIPYVGNGVLAASTSMDKLVMKQLFATRGLPQLPYVSFLKSEYEAHKDNIISLVEGKLTYPVFVKPANLGSSVGISKCTDSETLIHGIEEALQFDRKLVIEQGVNAREVEVAVLGNDTPETTLPGEVVKDVDFYDYKSKYKDGKVRLQIPADISEEIQSALRDMAVEAFKATDCSGLVRADFFLTEDDKIYINETNAMPGFTKFSMYPLLWENMGKSYSELITDLINLAKERYKDKKNIKYKMD.

The ATP-grasp domain maps to 134 to 339; the sequence is KQLFATRGLP…YSELITDLIN (206 aa). 167–222 is a binding site for ATP; sequence EGKLTYPVFVKPANLGSSVGISKCTDSETLIHGIEEALQFDRKLVIEQGVNAREVE. Mg(2+) is bound by residues Asp293, Glu306, and Asn308.

Belongs to the D-alanine--D-alanine ligase family. The cofactor is Mg(2+). Mn(2+) is required as a cofactor.

The protein localises to the cytoplasm. It carries out the reaction 2 D-alanine + ATP = D-alanyl-D-alanine + ADP + phosphate + H(+). Its pathway is cell wall biogenesis; peptidoglycan biosynthesis. Its function is as follows. Cell wall formation. The chain is D-alanine--D-alanine ligase from Macrococcus caseolyticus (strain JCSC5402) (Macrococcoides caseolyticum).